A 147-amino-acid chain; its full sequence is Large ribosomal subunit protein uL13 (147 aa).

Belongs to the universal ribosomal protein uL13 family. As to quaternary structure, part of the 50S ribosomal subunit.

In terms of biological role, this protein is one of the early assembly proteins of the 50S ribosomal subunit, although it is not seen to bind rRNA by itself. It is important during the early stages of 50S assembly. The protein is Large ribosomal subunit protein uL13 of Beutenbergia cavernae (strain ATCC BAA-8 / DSM 12333 / CCUG 43141 / JCM 11478 / NBRC 16432 / NCIMB 13614 / HKI 0122).